Here is a 270-residue protein sequence, read N- to C-terminus: Release factor glutamine methyltransferase (270 aa).

Residues 113-117 (GTGSG), aspartate 136, and asparagine 177 each bind S-adenosyl-L-methionine. 177–180 (NPPY) serves as a coordination point for substrate.

It belongs to the protein N5-glutamine methyltransferase family. PrmC subfamily.

The catalysed reaction is L-glutaminyl-[peptide chain release factor] + S-adenosyl-L-methionine = N(5)-methyl-L-glutaminyl-[peptide chain release factor] + S-adenosyl-L-homocysteine + H(+). Its function is as follows. Methylates the class 1 translation termination release factors RF1/PrfA and RF2/PrfB on the glutamine residue of the universally conserved GGQ motif. This Lactococcus lactis subsp. lactis (strain IL1403) (Streptococcus lactis) protein is Release factor glutamine methyltransferase.